The following is a 231-amino-acid chain: MFLVGLTGGIASGKSSVIQVFQQLGCAVIDVDIIARHIVQPGYPAHRRIVEAFGTEVLLENGDIDRKVLGDLIFNQPDRRHLLNSITHPEICKEMMKETFKYFLRGYRYVILDIPLLFETKKLLKYMKHTVVVYCDRDTQLARLMRRNNLSREDAEARIKAQLPLKDKARMARHVLDNSGEWSVTKRQVVLLHAELEHSLEYLPLRLGVLTGLAGIVGLLYLLTHYLLPSP.

The DPCK domain maps to 3–207 (LVGLTGGIAS…HSLEYLPLRL (205 aa)). 8–15 (GGIASGKS) lines the ATP pocket.

It belongs to the CoaE family.

This chain is Dephospho-CoA kinase domain-containing protein (DCAKD), found in Bos taurus (Bovine).